Consider the following 429-residue polypeptide: G2/mitotic-specific cyclin-B1 (429 aa).

The interval 71 to 114 (TGKVSAKIPPPKPLEKVPPVSEPEVELAETHEPEPVMDEKLSPE) is disordered. K73 carries the N6-acetyllysine modification. Over residues 98 to 112 (AETHEPEPVMDEKLS) the composition is skewed to basic and acidic residues. The residue at position 122 (S122) is a Phosphoserine; by CDK1. S124 carries the post-translational modification Phosphoserine. A Phosphoserine; by PLK1 modification is found at S129. A Phosphoserine modification is found at S143. Interaction with CDK2 stretches follow at residues 165–173 (EYVKDIYAY) and 254–257 (YEEM). T317 bears the Phosphothreonine mark.

This sequence belongs to the cyclin family. Cyclin AB subfamily. In terms of assembly, interacts with the CDC2 protein kinase to form a serine/threonine kinase holoenzyme complex also known as maturation promoting factor (MPF). The cyclin subunit imparts substrate specificity to the complex. Binds HEI10. Interacts with catalytically active RALBP1 and CDC2 during mitosis to form an endocytotic complex during interphase. Interacts with CCNF; interaction is required for nuclear localization. Interacts with CDK5RAP3. Interacts with RFPL4A and UBE2A. Interacts with INCA1. In terms of processing, ubiquitinated by the SCF(NIPA) complex during interphase, leading to its destruction. Not ubiquitinated during G2/M phases. Phosphorylated by PLK1 at Ser-129 on centrosomes during prophase: phosphorylation by PLK1 does not cause nuclear import. Phosphorylation at Ser-143 was also reported to be mediated by PLK1 but Ser-129 seems to be the primary phosphorylation site.

It localises to the cytoplasm. It is found in the nucleus. The protein resides in the cytoskeleton. Its subcellular location is the microtubule organizing center. The protein localises to the centrosome. Essential for the control of the cell cycle at the G2/M (mitosis) transition. The chain is G2/mitotic-specific cyclin-B1 (CCNB1) from Mesocricetus auratus (Golden hamster).